Reading from the N-terminus, the 132-residue chain is Phosphoribosyl-AMP cyclohydrolase (132 aa).

Mg(2+) is bound at residue Asp-76. Cys-77 is a Zn(2+) binding site. Residues Asp-78 and Asp-80 each coordinate Mg(2+). Positions 93 and 100 each coordinate Zn(2+).

Belongs to the PRA-CH family. In terms of assembly, homodimer. Requires Mg(2+) as cofactor. Zn(2+) is required as a cofactor.

It localises to the cytoplasm. It carries out the reaction 1-(5-phospho-beta-D-ribosyl)-5'-AMP + H2O = 1-(5-phospho-beta-D-ribosyl)-5-[(5-phospho-beta-D-ribosylamino)methylideneamino]imidazole-4-carboxamide. It participates in amino-acid biosynthesis; L-histidine biosynthesis; L-histidine from 5-phospho-alpha-D-ribose 1-diphosphate: step 3/9. In terms of biological role, catalyzes the hydrolysis of the adenine ring of phosphoribosyl-AMP. The protein is Phosphoribosyl-AMP cyclohydrolase of Methanobrevibacter smithii (strain ATCC 35061 / DSM 861 / OCM 144 / PS).